Here is a 2025-residue protein sequence, read N- to C-terminus: E3 ubiquitin-protein ligase TRIP12 (2025 aa).

The span at 1–10 (MSNRPNNNPG) shows a compositional bias: polar residues. The tract at residues 1-404 (MSNRPNNNPG…SGESESDDSE (404 aa)) is disordered. Serine 2 carries the post-translational modification N-acetylserine. Serine 12 bears the Phosphoserine mark. Polar residues predominate over residues 18 to 27 (RNTAGAQPQD). Residues 48-70 (DPDRANTSERQKTGQVPKKDNSR) show a composition bias toward basic and acidic residues. 3 positions are modified to phosphoserine: serine 77, serine 85, and serine 100. Polar residues-rich tracts occupy residues 78 to 88 (PDYNRTNSPSS), 99 to 108 (ESLSETNKPP), and 119 to 132 (EQQL…STSK). 2 stretches are compositionally biased toward low complexity: residues 154 to 166 (SSCV…SEST) and 175 to 216 (PTKL…SSTV). Lysine 181 carries the N6-acetyllysine modification. Residues 280–290 (PGSSKSETSKP) show a composition bias toward polar residues. A phosphoserine mark is found at serine 310 and serine 312. Over residues 326-338 (QKTTGSCASTSRR) the composition is skewed to polar residues. Over residues 346 to 358 (GAAEARRQEKMAD) the composition is skewed to basic and acidic residues. Positions 362-371 (NQETVNSSAA) are enriched in polar residues. Residues 379–397 (GAAASSSVAGAVGMTTSGE) show a composition bias toward low complexity. Residues 755-869 (MLKKGNAQNT…DPELAKSFIK (115 aa)) enclose the WWE domain. The interval 970–1077 (ESLLTSPPKA…QSPKSSFLAS (108 aa)) is disordered. Serine 975 is subject to Phosphoserine. Positions 983–1006 (GSGSLGSTTPASSGTATAATNASA) are enriched in low complexity. Serine 1024 and serine 1030 each carry phosphoserine. The span at 1034-1047 (KRKRLPKRGPRRPK) shows a compositional bias: basic residues. Serine 1049 is subject to Phosphoserine. The segment covering 1050 to 1059 (PPRDDDKVDN) has biased composition (basic and acidic residues). The segment covering 1062-1073 (KSPTTTQSPKSS) has biased composition (low complexity). Phosphoserine occurs at positions 1063, 1350, 1355, 1362, and 1409. A Phosphothreonine modification is found at threonine 1410. 2 disordered regions span residues 1440–1466 (SSKD…NAKK) and 1601–1620 (TNPE…PRLD). Lysine 1458 carries the N6-acetyllysine modification. At serine 1460 the chain carries Phosphoserine. The segment at 1529–1603 (EIIPTSEFIN…AMQRLLDTNP (75 aa)) is K-box. Positions 1918–2025 (PDHGYTHDSR…REGQQSFHLS (108 aa)) constitute an HECT domain. Catalysis depends on cysteine 1992, which acts as the Glycyl thioester intermediate.

This sequence belongs to the UPL family. K-HECT subfamily. As to quaternary structure, interacts with MYC; leading to disrupt interaction with isoform p19ARF/ARF of CDKN2A. Interacts with TRADD; leading to disrupt interaction with isoform p19ARF/ARF of CDKN2A. Interacts with SMARCC1; leading to disrupt interaction with SMARCE1.

The protein localises to the nucleus. It is found in the nucleoplasm. It catalyses the reaction S-ubiquitinyl-[E2 ubiquitin-conjugating enzyme]-L-cysteine + [acceptor protein]-L-lysine = [E2 ubiquitin-conjugating enzyme]-L-cysteine + N(6)-ubiquitinyl-[acceptor protein]-L-lysine.. It participates in protein modification; protein ubiquitination. Its function is as follows. E3 ubiquitin-protein ligase involved in ubiquitin fusion degradation (UFD) pathway and regulation of DNA repair. Part of the ubiquitin fusion degradation (UFD) pathway, a process that mediates ubiquitination of protein at their N-terminus, regardless of the presence of lysine residues in target proteins. Acts as a key regulator of DNA damage response by acting as a suppressor of RNF168, an E3 ubiquitin-protein ligase that promotes accumulation of 'Lys-63'-linked histone H2A and H2AX at DNA damage sites, thereby acting as a guard against excessive spreading of ubiquitinated chromatin at damaged chromosomes. In normal cells, mediates ubiquitination and degradation of isoform p19ARF/ARF of CDKN2A, a lysine-less tumor suppressor required for p53/TP53 activation under oncogenic stress. In cancer cells, however, isoform p19ARF/ARF and TRIP12 are located in different cell compartments, preventing isoform p19ARF/ARF ubiquitination and degradation. Does not mediate ubiquitination of isoform p16-INK4a of CDKN2A. Also catalyzes ubiquitination of NAE1 and SMARCE1, leading to their degradation. Ubiquitination and degradation of target proteins is regulated by interaction with proteins such as MYC, TRADD or SMARCC1, which disrupt the interaction between TRIP12 and target proteins. Mediates ubiquitination of ASXL1: following binding to N(6)-methyladenosine methylated DNA, ASXL1 is ubiquitinated by TRIP12, leading to its degradation and subsequent inactivation of the PR-DUB complex. The chain is E3 ubiquitin-protein ligase TRIP12 (Trip12) from Rattus norvegicus (Rat).